Consider the following 651-residue polypeptide: Aspartate--tRNA ligase, mitochondrial (651 aa).

The transit peptide at 1 to 44 directs the protein to the mitochondrion; it reads MFCWLSRLCGELSTPTRRTTQLIWSSAARSMVLSSQRIPELSSF. Thr216 carries the post-translational modification Phosphothreonine. The residue at position 239 (Ser239) is a Phosphoserine. The segment at 241-244 is aspartate; it reads QQFK. Arg263 provides a ligand contact to L-aspartate. 263–265 is an ATP binding site; that stretch reads RDE. Residue Lys379 is modified to N6-acetyllysine. An ATP-binding site is contributed by Glu532. Arg539 serves as a coordination point for L-aspartate. An ATP-binding site is contributed by 581–584; it reads GLDR.

The protein belongs to the class-II aminoacyl-tRNA synthetase family. Type 1 subfamily. In terms of assembly, homodimer.

Its subcellular location is the mitochondrion matrix. It is found in the mitochondrion membrane. It carries out the reaction tRNA(Asp) + L-aspartate + ATP = L-aspartyl-tRNA(Asp) + AMP + diphosphate. Functionally, catalyzes the attachment of aspartate to tRNA(Asp) in a two-step reaction: aspartate is first activated by ATP to form Asp-AMP and then transferred to the acceptor end of tRNA(Asp). The sequence is that of Aspartate--tRNA ligase, mitochondrial (DARS2) from Bos taurus (Bovine).